We begin with the raw amino-acid sequence, 165 residues long: Destrin (165 aa).

Position 2 is an N-acetylalanine (A2). In terms of domain architecture, ADF-H spans 4 to 153; it reads GVQVADEVCR…NRACIAEKLG (150 aa). The Nuclear localization signal signature appears at 30 to 34; it reads KKRKK.

This sequence belongs to the actin-binding proteins ADF family.

Its function is as follows. Actin-depolymerizing protein. Severs actin filaments (F-actin) and binds to actin monomers (G-actin). Acts in a pH-independent manner. The chain is Destrin (DSTN) from Gallus gallus (Chicken).